A 553-amino-acid polypeptide reads, in one-letter code: ATP synthase F(1) complex subunit alpha, mitochondrial (553 aa).

Residues 1-43 (MLSVRVAAAVVRALPRRAGLVSRNALGSSFIAARNFHASNTHL) constitute a mitochondrion transit peptide. Phosphoserine occurs at positions 53 and 65. Ser76 is subject to Phosphoserine; alternate. Ser76 carries O-linked (GlcNAc) serine; alternate glycosylation. Position 106 is a phosphoserine (Ser106). Lys123, Lys126, and Lys132 each carry N6-acetyllysine. Phosphothreonine is present on Thr134. At Lys161 the chain carries N6-acetyllysine; alternate. Residue Lys161 is modified to N6-succinyllysine; alternate. Ser166 carries the post-translational modification Phosphoserine. N6-acetyllysine; alternate is present on Lys167. At Lys167 the chain carries N6-succinyllysine; alternate. The residue at position 184 (Ser184) is a Phosphoserine. Arg204 carries the post-translational modification Omega-N-methylarginine. Residues Gln215, Gly217, Lys218, Thr219, and Ser220 each contribute to the ATP site. Thr219 is a Mg(2+) binding site. Residues Lys230 and Lys239 each carry the N6-acetyllysine; alternate modification. An N6-succinyllysine; alternate mark is found at Lys230 and Lys239. Lys240 carries the N6-acetyllysine modification. 2 positions are modified to N6-acetyllysine; alternate: Lys261 and Lys305. An N6-succinyllysine; alternate mark is found at Lys261 and Lys305. Asp312 serves as a coordination point for Mg(2+). N6-acetyllysine; alternate is present on Lys427. The residue at position 427 (Lys427) is an N6-succinyllysine; alternate. The residue at position 434 (Lys434) is an N6-acetyllysine. Residues Gln473 and Gln475 each contribute to the ATP site. Lys498, Lys506, Lys531, and Lys539 each carry N6-acetyllysine; alternate. An N6-succinyllysine; alternate mark is found at Lys498, Lys506, Lys531, and Lys539. Lys541 carries the post-translational modification N6-acetyllysine.

The protein belongs to the ATPase alpha/beta chains family. In terms of assembly, homotrimer. Component of the ATP synthase complex composed at least of ATP5F1A/subunit alpha, ATP5F1B/subunit beta, ATP5MC1/subunit c (homooctomer), MT-ATP6/subunit a, MT-ATP8/subunit 8, ATP5ME/subunit e, ATP5MF/subunit f, ATP5MG/subunit g, ATP5MK/subunit k, ATP5MJ/subunit j, ATP5F1C/subunit gamma, ATP5F1D/subunit delta, ATP5F1E/subunit epsilon, ATP5PF/subunit F6, ATP5PB/subunit b, ATP5PD/subunit d, ATP5PO/subunit OSCP. ATP synthase complex consists of a soluble F(1) head domain (subunits alpha(3) and beta(3)) - the catalytic core - and a membrane F(0) domain - the membrane proton channel (subunits c, a, 8, e, f, g, k and j). These two domains are linked by a central stalk (subunits gamma, delta, and epsilon) rotating inside the F1 region and a stationary peripheral stalk (subunits F6, b, d, and OSCP). Interacts with ATPAF2. Interacts with HRG; the interaction occurs on the surface of T-cells and alters the cell morphology when associated with concanavalin (in vitro). Interacts with PLG (angiostatin peptide); the interaction inhibits most of the angiogenic properties of angiostatin. Interacts with BLOC1S1. Interacts with BCL2L1 isoform BCL-X(L); the interaction mediates the association of BCL2L1 isoform BCL-X(L) with the mitochondrial membrane F(1)F(0) ATP synthase and enhances neurons metabolic efficiency. Interacts with CLN5 and PPT1. Interacts with S100A1; this interaction increases F1-ATPase activity. Interacts with ABCB7; this interaction allows the regulation of cellular iron homeostasis and cellular reactive oxygen species (ROS) levels in cardiomyocytes. Acetylated on lysine residues. BLOC1S1 is required for acetylation.

The protein resides in the mitochondrion inner membrane. It localises to the cell membrane. Its function is as follows. Subunit alpha, of the mitochondrial membrane ATP synthase complex (F(1)F(0) ATP synthase or Complex V) that produces ATP from ADP in the presence of a proton gradient across the membrane which is generated by electron transport complexes of the respiratory chain. ATP synthase complex consist of a soluble F(1) head domain - the catalytic core - and a membrane F(1) domain - the membrane proton channel. These two domains are linked by a central stalk rotating inside the F(1) region and a stationary peripheral stalk. During catalysis, ATP synthesis in the catalytic domain of F(1) is coupled via a rotary mechanism of the central stalk subunits to proton translocation. In vivo, can only synthesize ATP although its ATP hydrolase activity can be activated artificially in vitro. With the catalytic subunit beta (ATP5F1B), forms the catalytic core in the F(1) domain. Subunit alpha does not bear the catalytic high-affinity ATP-binding sites. This chain is ATP synthase F(1) complex subunit alpha, mitochondrial, found in Pongo abelii (Sumatran orangutan).